Reading from the N-terminus, the 478-residue chain is Membrane-bound lytic murein transglycosylase F (478 aa).

A signal peptide spans 1-22 (MTRFLFAIILGLLLTACQQETV). The tract at residues 23-257 (EETEFVPHKL…HLNEKYFGHV (235 aa)) is non-LT domain. The interval 258–478 (KRFDYIDTRA…PGTLSPDKPK (221 aa)) is LT domain. Residue E302 is part of the active site. A disordered region spans residues 447–478 (KQQNSEEVAPSDLTAEETPVPAPGTLSPDKPK).

In the N-terminal section; belongs to the bacterial solute-binding protein 3 family. This sequence in the C-terminal section; belongs to the transglycosylase Slt family.

It localises to the cell outer membrane. The catalysed reaction is Exolytic cleavage of the (1-&gt;4)-beta-glycosidic linkage between N-acetylmuramic acid (MurNAc) and N-acetylglucosamine (GlcNAc) residues in peptidoglycan, from either the reducing or the non-reducing ends of the peptidoglycan chains, with concomitant formation of a 1,6-anhydrobond in the MurNAc residue.. In terms of biological role, murein-degrading enzyme that degrades murein glycan strands and insoluble, high-molecular weight murein sacculi, with the concomitant formation of a 1,6-anhydromuramoyl product. Lytic transglycosylases (LTs) play an integral role in the metabolism of the peptidoglycan (PG) sacculus. Their lytic action creates space within the PG sacculus to allow for its expansion as well as for the insertion of various structures such as secretion systems and flagella. The protein is Membrane-bound lytic murein transglycosylase F of Shewanella oneidensis (strain ATCC 700550 / JCM 31522 / CIP 106686 / LMG 19005 / NCIMB 14063 / MR-1).